Consider the following 315-residue polypeptide: Vomeronasal type-1 receptor 54 (315 aa).

Over 1–15 (MNKMNRLSHNTEIRN) the chain is Extracellular. The chain crosses the membrane as a helical span at residues 16–40 (AIYSGVGIGISGNSFLLLFHIFKYI). The Cytoplasmic portion of the chain corresponds to 41-51 (RGQRSRHIDLP). Residues 52-71 (IGLLSLIHLVMLIAMSLVAT) traverse the membrane as a helical segment. Residues 72 to 90 (DIFMPWGRWGDTTCKCVIS) lie on the Extracellular side of the membrane. Residues Cys85 and Cys172 are joined by a disulfide bond. The chain crosses the membrane as a helical span at residues 91 to 112 (LYRFCRSLSLCATSLLSILQAV). Residues 113-132 (TLNPRNSCLEKFKRKSPHYM) are Cytoplasmic-facing. The helical transmembrane segment at 133 to 154 (LGCLLFLSVFYTFISSPLATYI) threads the bilayer. At 155–193 (TAKSNLTSPSFTYITTSCSLAPMSYSFHLTVFILLTSRD) the chain is on the extracellular side. Residues 194-212 (VIFVGLMLLSSGYMVTFLG) form a helical membrane-spanning segment. Over 213 to 239 (RHKKQSQFLHITSFSLKPSAEKRAMRT) the chain is Cytoplasmic. The chain crosses the membrane as a helical span at residues 240–260 (ILCLMSFFVLMYTLDSIVSYI). Residues 261-267 (RSIDDGQ) lie on the Extracellular side of the membrane. Residues 268 to 288 (IFYCVHIFTAHGYATVSPFLI) form a helical membrane-spanning segment. Residues 289–315 (LSTEKYIINIFRSTFGRMVTIILLRNR) are Cytoplasmic-facing.

This sequence belongs to the G-protein coupled receptor 1 family.

The protein localises to the cell membrane. In terms of biological role, putative pheromone receptor implicated in the regulation of social and reproductive behavior. This is Vomeronasal type-1 receptor 54 (Vmn1r54) from Mus musculus (Mouse).